The following is a 207-amino-acid chain: Large ribosomal subunit protein bL17m (207 aa).

Basic and acidic residues predominate over residues 173–200; sequence EKESEHARLKEDHEDEKTVKKDWKRGDP. Residues 173-207 form a disordered region; the sequence is EKESEHARLKEDHEDEKTVKKDWKRGDPIPRPTYI.

It belongs to the bacterial ribosomal protein bL17 family. Component of the mitochondrial large ribosomal subunit (mt-LSU). Mature yeast 74S mitochondrial ribosomes consist of a small (37S) and a large (54S) subunit. The 37S small subunit contains a 15S ribosomal RNA (15S mt-rRNA) and at least 32 different proteins. The 54S large subunit contains a 21S rRNA (21S mt-rRNA) and at least 45 different proteins.

The protein resides in the mitochondrion. In terms of biological role, component of the mitochondrial ribosome (mitoribosome), a dedicated translation machinery responsible for the synthesis of mitochondrial genome-encoded proteins, including at least some of the essential transmembrane subunits of the mitochondrial respiratory chain. The mitoribosomes are attached to the mitochondrial inner membrane and translation products are cotranslationally integrated into the membrane. In Schizosaccharomyces pombe (strain 972 / ATCC 24843) (Fission yeast), this protein is Large ribosomal subunit protein bL17m (mrpl8).